Reading from the N-terminus, the 25-residue chain is Zinc metalloproteinase-disintegrin-like daborhagin-M (25 aa).

In terms of domain architecture, Peptidase M12B spans 14-25 (SYVELIITVDHS). Glu17 is a Ca(2+) binding site.

This sequence belongs to the venom metalloproteinase (M12B) family. P-III subfamily. P-IIIa sub-subfamily. In terms of assembly, monomer. The cofactor is Zn(2+). Post-translationally, N-glycosylated. Contains 16 disulfide bonds. As to expression, expressed by the venom gland.

The protein localises to the secreted. With respect to regulation, inhibited by EDTA, EGTA and 1,10-phenanthroline. Addition of Mg(2+) or Ca(2+) increases the casein hydrolysis rate. Its function is as follows. Snake venom zinc metalloprotease that possesses high hemorrhagic activity (minimum hemorrhagic dose, MHD=0.86 ug) when subcutaneously injected into mice. Has potent fibrinogenolytic activity on alpha-chain of fibrinogen (FGA). Hydrolyzes model substrate (beta-chain of insulin) at Ala(14)-Leu(15) and Tyr(16)-Leu(17) followed by His(10)-Leu(11) and Phe(24)-Phe(25). The protein is Zinc metalloproteinase-disintegrin-like daborhagin-M of Daboia siamensis (Eastern Russel's viper).